The chain runs to 227 residues: 7-cyano-7-deazaguanine synthase (227 aa).

8-18 (VSGGADSATVL) contacts ATP. Zn(2+) is bound by residues Cys-192, Cys-202, Cys-205, and Cys-208.

This sequence belongs to the QueC family. Requires Zn(2+) as cofactor.

The enzyme catalyses 7-carboxy-7-deazaguanine + NH4(+) + ATP = 7-cyano-7-deazaguanine + ADP + phosphate + H2O + H(+). The protein operates within purine metabolism; 7-cyano-7-deazaguanine biosynthesis. Functionally, catalyzes the ATP-dependent conversion of 7-carboxy-7-deazaguanine (CDG) to 7-cyano-7-deazaguanine (preQ(0)). This is 7-cyano-7-deazaguanine synthase from Rickettsia canadensis (strain McKiel).